Consider the following 168-residue polypeptide: Peptide methionine sulfoxide reductase 2 (168 aa).

Positions 40 to 168 constitute a MsrB domain; sequence DVKWNDALTP…NSASLNLKKD (129 aa). 4 residues coordinate Zn(2+): C79, C82, C128, and C131. C97 and C157 are disulfide-bonded. C157 serves as the catalytic Nucleophile.

It belongs to the MsrB Met sulfoxide reductase family. The cofactor is Zn(2+).

It carries out the reaction L-methionyl-[protein] + [thioredoxin]-disulfide + H2O = L-methionyl-(R)-S-oxide-[protein] + [thioredoxin]-dithiol. Methionine-R-sulfoxide reductase which catalyzes the reduction of methionine sulfoxide (MetSO) to methionine in proteins. Plays a protective role against oxidative stress by restoring activity to proteins that have been inactivated by methionine oxidation. Protects iron-sulfur clusters from oxidative inactivation along with MXR1. Involved in the regulation of lifespan. This is Peptide methionine sulfoxide reductase 2 (MXR2) from Saccharomyces cerevisiae (strain ATCC 204508 / S288c) (Baker's yeast).